The following is a 124-amino-acid chain: Ribonuclease P protein subunit p14 (124 aa).

The protein belongs to the eukaryotic/archaeal RNase P protein component 2 family. RNase P consists of a catalytic RNA moiety and about 10 protein subunits; POP1, POP4, POP5, POP7, RPP14, RPP21, RPP25, RPP30, RPP38 and RPP40. Within the RNase P complex, POP1, POP7 and RPP25 form the 'finger' subcomplex, POP5, RPP14, RPP40 and homodimeric RPP30 form the 'palm' subcomplex, and RPP21, POP4 and RPP38 form the 'wrist' subcomplex. All subunits of the RNase P complex interact with the catalytic RNA.

It localises to the nucleus. It is found in the nucleolus. Functionally, component of ribonuclease P, a ribonucleoprotein complex that generates mature tRNA molecules by cleaving their 5'-ends. The protein is Ribonuclease P protein subunit p14 (RPP14) of Homo sapiens (Human).